The primary structure comprises 498 residues: Actin-binding protein WASF2 (498 aa).

Disordered stretches follow at residues 173–203 (KEKR…KEEW) and 240–435 (NVDA…AVSD). Residues 252 to 263 (SDSASSPSPSFS) show a composition bias toward low complexity. Pro residues predominate over residues 298 to 407 (SHPPPAPPLG…PPPGPPPPPF (110 aa)). The WH2 domain maps to 436–453 (ARSDLLSAIRQGFQLRRV). The residue at position 474 (S474) is a Phosphoserine.

The protein belongs to the SCAR/WAVE family. Binds actin and the Arp2/3 complex. Interacts with BAIAP2. Component of the WAVE2 complex composed of ABI1, CYFIP1/SRA1, NCKAP1/NAP1 (NCKAP1l/HEM1 in hematopoietic cells) and WASF2/WAVE2. Directly interacts with BRK1. Interacts with FNBP1L (via the SH3 domain). As to quaternary structure, (Microbial infection) Interacts with human cytomegalovirus protein UL135. As to expression, expressed in all tissues with strongest expression in placenta, lung, and peripheral blood leukocytes, but not in skeletal muscle.

Its subcellular location is the cytoplasm. It is found in the cytoskeleton. The protein localises to the cell projection. The protein resides in the lamellipodium. It localises to the basolateral cell membrane. In terms of biological role, downstream effector molecule involved in the transmission of signals from tyrosine kinase receptors and small GTPases to the actin cytoskeleton. Promotes formation of actin filaments. Part of the WAVE complex that regulates lamellipodia formation. The WAVE complex regulates actin filament reorganization via its interaction with the Arp2/3 complex. In Homo sapiens (Human), this protein is Actin-binding protein WASF2.